Consider the following 432-residue polypeptide: MRKIKRLNSSLAEFRREFDELLLRGNVDMDTVIPVVSGLIKEIRTQGDAALLAHVAKFDRWNPKSAMELKIDPSLMKRAYEGLEASLREALHSAYNRIHSFHSKQKPQSWLDFEENGTILGQKVTPMDRAGLYIPGGKAAYPSSLLMNAIPAIVAGVKEIVVCTPTPENEPNELLLAACHLCGIKEVYKVGGASAIAAMAYGTESLGRVDVITGPGNIYVATAKKLVFGQVNIDMVAGPSEIGILADESAKAPWVALDLLSQAEHDEMASSILVTPSVELADAVDVEVERALERLDRKEISSKSIYTRGAIIIAKDMNEAVSLMNEIAPEHLEVLVENPFGWLPEIRHAGAIFLGENTPEPIGDYIAGPNHTLPTGGTARFYSPLSTEHFMKKSSILSFSERGIRELGHHCAKLAQTEGLDAHKESVLARLV.

Residues serine 240, glutamine 262, and histidine 265 each coordinate substrate. 2 residues coordinate Zn(2+): glutamine 262 and histidine 265. Catalysis depends on proton acceptor residues glutamate 330 and histidine 331. Substrate contacts are provided by histidine 331, aspartate 364, glutamate 418, and histidine 423. Aspartate 364 provides a ligand contact to Zn(2+). Histidine 423 lines the Zn(2+) pocket.

This sequence belongs to the histidinol dehydrogenase family. Requires Zn(2+) as cofactor.

It carries out the reaction L-histidinol + 2 NAD(+) + H2O = L-histidine + 2 NADH + 3 H(+). It participates in amino-acid biosynthesis; L-histidine biosynthesis; L-histidine from 5-phospho-alpha-D-ribose 1-diphosphate: step 9/9. Catalyzes the sequential NAD-dependent oxidations of L-histidinol to L-histidinaldehyde and then to L-histidine. The chain is Histidinol dehydrogenase from Wolinella succinogenes (strain ATCC 29543 / DSM 1740 / CCUG 13145 / JCM 31913 / LMG 7466 / NCTC 11488 / FDC 602W) (Vibrio succinogenes).